The chain runs to 513 residues: GMP synthase [glutamine-hydrolyzing] (513 aa).

In terms of domain architecture, Glutamine amidotransferase type-1 spans 3 to 200; the sequence is SVTVLDFGSQ…LIDIAGIKPD (198 aa). Cysteine 80 functions as the Nucleophile in the catalytic mechanism. Residues histidine 174 and glutamate 176 contribute to the active site. One can recognise a GMPS ATP-PPase domain in the interval 201–388; that stretch reads WSPKSFIGHQ…LGIAEDILMR (188 aa). 228-234 is an ATP binding site; it reads SGGVDST.

Homodimer.

It carries out the reaction XMP + L-glutamine + ATP + H2O = GMP + L-glutamate + AMP + diphosphate + 2 H(+). The protein operates within purine metabolism; GMP biosynthesis; GMP from XMP (L-Gln route): step 1/1. Its function is as follows. Catalyzes the synthesis of GMP from XMP. This chain is GMP synthase [glutamine-hydrolyzing], found in Chlorobium phaeobacteroides (strain DSM 266 / SMG 266 / 2430).